Reading from the N-terminus, the 87-residue chain is Cytochrome c oxidase assembly factor 3, mitochondrial (87 aa).

The chain crosses the membrane as a helical span at residues 47-69; the sequence is NNLLTAGALGVSVLAIYGYSIFS.

It belongs to the COA3 family.

The protein resides in the mitochondrion membrane. Its function is as follows. Plays a critical role in the biogenesis and activity of cytochrome c oxidase (COX) (complex IV). The protein is Cytochrome c oxidase assembly factor 3, mitochondrial (Ccdc56) of Drosophila melanogaster (Fruit fly).